Here is a 559-residue protein sequence, read N- to C-terminus: Potassium-transporting ATPase potassium-binding subunit (559 aa).

13 helical membrane passes run 5–25 (GFLLIASFLLILLVLAKPLGS), 27–47 (LARLIAAVPLPGVAGVERILW), 63–83 (LLALLTLNLLGLGILFCLLFW), 132–152 (GLTVQNFLSAATGIAVVFALI), 170–190 (LVRITLWILFPVALIIALFFI), 253–273 (LAQMLAIFLIPAALCFAFGEA), 283–303 (LLWAMSFIFVVCVAVVMWAEV), 327–347 (FGVLASSLFAVVTTAASCGAV), 356–376 (ALGGMVPMWLMQIGEVVFGGV), 379–399 (GLYGMLLFVLLAVFIAGLMIG), 416–436 (MTALAILVTPMLVLLGSALAM), 484–504 (LLAFCMFVGRFGVIIPVMAIA), and 524–544 (GALFIGLLIGTVLLVGALTFI).

Belongs to the KdpA family. In terms of assembly, the system is composed of three essential subunits: KdpA, KdpB and KdpC.

The protein localises to the cell inner membrane. Its function is as follows. Part of the high-affinity ATP-driven potassium transport (or Kdp) system, which catalyzes the hydrolysis of ATP coupled with the electrogenic transport of potassium into the cytoplasm. This subunit binds the periplasmic potassium ions and delivers the ions to the membrane domain of KdpB through an intramembrane tunnel. The protein is Potassium-transporting ATPase potassium-binding subunit of Salmonella enteritidis PT4 (strain P125109).